A 496-amino-acid polypeptide reads, in one-letter code: 3-octaprenyl-4-hydroxybenzoate carboxy-lyase (496 aa).

Asn-181 provides a ligand contact to Mn(2+). Residues 184-186, 198-200, and 203-204 each bind prenylated FMN; these read IYR, RWL, and RG. Position 247 (Glu-247) interacts with Mn(2+). The active-site Proton donor is Asp-296.

This sequence belongs to the UbiD family. In terms of assembly, homohexamer. Prenylated FMN serves as cofactor. Mn(2+) is required as a cofactor.

The protein resides in the cell membrane. It catalyses the reaction a 4-hydroxy-3-(all-trans-polyprenyl)benzoate + H(+) = a 2-(all-trans-polyprenyl)phenol + CO2. It functions in the pathway cofactor biosynthesis; ubiquinone biosynthesis. In terms of biological role, catalyzes the decarboxylation of 3-octaprenyl-4-hydroxy benzoate to 2-octaprenylphenol, an intermediate step in ubiquinone biosynthesis. This is 3-octaprenyl-4-hydroxybenzoate carboxy-lyase from Azoarcus sp. (strain BH72).